Reading from the N-terminus, the 356-residue chain is Protein pelota homolog (356 aa).

It belongs to the eukaryotic release factor 1 family. Pelota subfamily. In terms of assembly, monomer. Requires a divalent metal cation as cofactor.

The protein resides in the cytoplasm. May function in recognizing stalled ribosomes, interact with stem-loop structures in stalled mRNA molecules, and effect endonucleolytic cleavage of the mRNA. May play a role in the release non-functional ribosomes and degradation of damaged mRNAs. Has endoribonuclease activity. The chain is Protein pelota homolog from Desulfurococcus amylolyticus (strain DSM 18924 / JCM 16383 / VKM B-2413 / 1221n) (Desulfurococcus kamchatkensis).